Consider the following 379-residue polypeptide: UDP-N-acetylglucosamine--N-acetylmuramyl-(pentapeptide) pyrophosphoryl-undecaprenol N-acetylglucosamine transferase (379 aa).

UDP-N-acetyl-alpha-D-glucosamine is bound by residues 19-21, asparagine 133, arginine 174, serine 207, isoleucine 261, and glutamine 306; that span reads TGG.

It belongs to the glycosyltransferase 28 family. MurG subfamily.

It is found in the cell inner membrane. It carries out the reaction di-trans,octa-cis-undecaprenyl diphospho-N-acetyl-alpha-D-muramoyl-L-alanyl-D-glutamyl-meso-2,6-diaminopimeloyl-D-alanyl-D-alanine + UDP-N-acetyl-alpha-D-glucosamine = di-trans,octa-cis-undecaprenyl diphospho-[N-acetyl-alpha-D-glucosaminyl-(1-&gt;4)]-N-acetyl-alpha-D-muramoyl-L-alanyl-D-glutamyl-meso-2,6-diaminopimeloyl-D-alanyl-D-alanine + UDP + H(+). It functions in the pathway cell wall biogenesis; peptidoglycan biosynthesis. In terms of biological role, cell wall formation. Catalyzes the transfer of a GlcNAc subunit on undecaprenyl-pyrophosphoryl-MurNAc-pentapeptide (lipid intermediate I) to form undecaprenyl-pyrophosphoryl-MurNAc-(pentapeptide)GlcNAc (lipid intermediate II). This Porphyromonas gingivalis (strain ATCC BAA-308 / W83) protein is UDP-N-acetylglucosamine--N-acetylmuramyl-(pentapeptide) pyrophosphoryl-undecaprenol N-acetylglucosamine transferase.